The chain runs to 65 residues: Large ribosomal subunit protein uL29 (65 aa).

Belongs to the universal ribosomal protein uL29 family.

The sequence is that of Large ribosomal subunit protein uL29 from Delftia acidovorans (strain DSM 14801 / SPH-1).